The primary structure comprises 612 residues: Elongation factor 4 (612 aa).

A tr-type G domain is found at 12–194 (SRIRNFSIIA…QIVEKVPAPA (183 aa)). Residues 24 to 29 (DHGKST) and 141 to 144 (NKID) contribute to the GTP site.

This sequence belongs to the TRAFAC class translation factor GTPase superfamily. Classic translation factor GTPase family. LepA subfamily.

The protein resides in the cell membrane. The catalysed reaction is GTP + H2O = GDP + phosphate + H(+). In terms of biological role, required for accurate and efficient protein synthesis under certain stress conditions. May act as a fidelity factor of the translation reaction, by catalyzing a one-codon backward translocation of tRNAs on improperly translocated ribosomes. Back-translocation proceeds from a post-translocation (POST) complex to a pre-translocation (PRE) complex, thus giving elongation factor G a second chance to translocate the tRNAs correctly. Binds to ribosomes in a GTP-dependent manner. This chain is Elongation factor 4, found in Bacillus pumilus (strain SAFR-032).